The sequence spans 354 residues: Protein-arginine kinase (354 aa).

The Phosphagen kinase C-terminal domain maps to 24–254 (IVLSSRIRLA…QQIIHQEKTA (231 aa)). ATP-binding positions include 27-31 (SSRIR), histidine 92, arginine 125, 176-180 (RASVM), and 207-212 (RGIYGE). The RDXXRA motif of the pArg binding pocket involved in allosteric regulation motif lies at 337–342 (RDYRRA).

This sequence belongs to the ATP:guanido phosphotransferase family.

It carries out the reaction L-arginyl-[protein] + ATP = N(omega)-phospho-L-arginyl-[protein] + ADP + H(+). Appears to be allosterically activated by the binding of pArg-containing polypeptides to the pArg-binding pocket localized in the C-terminal domain of McsB. Catalyzes the specific phosphorylation of arginine residues in a large number of proteins. Is part of the bacterial stress response system. Protein arginine phosphorylation has a physiologically important role and is involved in the regulation of many critical cellular processes, such as protein homeostasis, motility, competence, and stringent and stress responses, by regulating gene expression and protein activity. The sequence is that of Protein-arginine kinase from Bacillus mycoides (strain KBAB4) (Bacillus weihenstephanensis).